Consider the following 345-residue polypeptide: Delta(6)-protoilludene synthase (345 aa).

Asp84, Asn220, Ser224, and Glu228 together coordinate Mg(2+). A DDXXD motif motif is present at residues 84–88 (DEYSD). (2E,6E)-farnesyl diphosphate contacts are provided by Arg309 and Tyr310.

It belongs to the terpene synthase family. Monomer. Mg(2+) serves as cofactor.

The enzyme catalyses (2E,6E)-farnesyl diphosphate = Delta(6)-protoilludene + diphosphate. It functions in the pathway secondary metabolite biosynthesis. Delta(6)-protoilludene synthase, part of the gene cluster that mediates the biosynthesis of melleolides, a range of antifungal and phytotoxic polyketide derivatives composed of an orsellinic acid (OA) moiety esterified to various sesquiterpene alcohols. The first step in melleolides biosynthesis is performed by the delta(6)-protoilludene synthase PRO1 which catalyzes the cyclization of farnesyl diphosphate to protoilludene. The orsellinic acid synthase armB produces OA by condensing acetyl-CoA with 3 malonyl-CoA units in a three-round chain elongation reaction folowed by a C2-C7 ring closure. ArmB further catalyzes the trans-esterification of OA to the various sesquiterpene alcohols resulting from the hydroxylation of protoilludene. The melleolides cluster also includes 5 cytochrome P450 monooxygenases, 4 NAD(+)-dependent oxidoreductases, one flavin-dependent oxidoreductase, and one O-methyltransferase. The cytochrome P450 monooxygenases may be involved in protoilludene hydroxylation to elaborate melleolides with multiple alcohol groups, such as melleolide D, which carries alcohol functionalities at C-4, C-5, C-10, and C-13. The role of the NAD(+)-dependent enzymes remains unknown. Numerous melleolides, including arnamial, show 5'-O-methylation of the aromatic moiety which may be catalyzed by the methyltransferase encoded in the cluster. The flavin-dependent oxidoreductase might represent the dehydrogenase yielding the aldehyde in position 1 of arnamial and other melleolides. Finally, several halogenases, localized outside of the cluster, are able to catalyze the transfer of a single chlorine atom to the melleolide backbone, resulting in a 6'-chloromelleolide product. The polypeptide is Delta(6)-protoilludene synthase (Armillaria gallica (Bulbous honey fungus)).